We begin with the raw amino-acid sequence, 150 residues long: Large ribosomal subunit protein eL19 (150 aa).

The segment at 56-90 (RGISSGRLKERKHKRRSKGEGRKHGSRKGKSGART) is disordered.

Belongs to the eukaryotic ribosomal protein eL19 family. Part of the 50S ribosomal subunit.

Its function is as follows. Binds to the 23S rRNA. This is Large ribosomal subunit protein eL19 from Sulfolobus acidocaldarius (strain ATCC 33909 / DSM 639 / JCM 8929 / NBRC 15157 / NCIMB 11770).